Consider the following 332-residue polypeptide: Putative D-threonate 4-phosphate dehydrogenase (332 aa).

Substrate-binding residues include histidine 138 and threonine 139. Residues histidine 168, histidine 211, and histidine 266 each contribute to the a divalent metal cation site. Substrate contacts are provided by lysine 274 and arginine 292.

This sequence belongs to the PdxA family. PdxA2 subfamily. Homodimer. A divalent metal cation serves as cofactor.

It carries out the reaction 4-O-phospho-D-threonate + NAD(+) = dihydroxyacetone phosphate + CO2 + NADH. Its function is as follows. Catalyzes the NAD-dependent oxidation and subsequent decarboxylation of D-threonate 4-phosphate to produce dihydroxyacetone phosphate (DHAP). The sequence is that of Putative D-threonate 4-phosphate dehydrogenase from Fusobacterium nucleatum subsp. nucleatum (strain ATCC 25586 / DSM 15643 / BCRC 10681 / CIP 101130 / JCM 8532 / KCTC 2640 / LMG 13131 / VPI 4355).